The primary structure comprises 879 residues: Phosphoenolpyruvate carboxylase (879 aa).

Active-site residues include His-137 and Lys-545.

It belongs to the PEPCase type 1 family. Requires Mg(2+) as cofactor.

The enzyme catalyses oxaloacetate + phosphate = phosphoenolpyruvate + hydrogencarbonate. Forms oxaloacetate, a four-carbon dicarboxylic acid source for the tricarboxylic acid cycle. The chain is Phosphoenolpyruvate carboxylase from Yersinia enterocolitica serotype O:8 / biotype 1B (strain NCTC 13174 / 8081).